Consider the following 389-residue polypeptide: MTTKCPHFQTQQCQSCQWINRPYDEQLNEKQIHLKQQIAPLDQSQLRWSAPFQSRQSGFRNKAKMVVSGAVERPVLGILKDQNAPQSAVDLTDCLLYSAGFKPIFPVLKDFIGRAGLVPYNVAKQKGELKYILLTESGYQGDIMLRFVLRSENKIPLIRRELAKLREKLPQLKVISANIQPQHAAILEGEKEIFFTERQVLEERFNRIPLFIRPQGFFQTNPQVAEGLYGTAQQWVKDLPVNKLWDLFCGVGGFGLHCAKALQEKNPDIELTGIEIAPSAIYCAGLSAQKCGLKKVNFQSLDAANFALNQDENKPDLVIVNPPRRGIGKPLAQFLNQMQPQFILYSSCNAISMTKDLLELTHYQLQKIQLFDMFPHTSHYEVLTLLIKR.

Residues Cys-5, Cys-13, Cys-16, and Cys-94 each contribute to the [4Fe-4S] cluster site. S-adenosyl-L-methionine is bound by residues Gln-219, Phe-248, Glu-275, and Asn-321. Cys-348 (nucleophile) is an active-site residue.

Belongs to the class I-like SAM-binding methyltransferase superfamily. RNA M5U methyltransferase family. RlmC subfamily.

The catalysed reaction is uridine(747) in 23S rRNA + S-adenosyl-L-methionine = 5-methyluridine(747) in 23S rRNA + S-adenosyl-L-homocysteine + H(+). Its function is as follows. Catalyzes the formation of 5-methyl-uridine at position 747 (m5U747) in 23S rRNA. The chain is 23S rRNA (uracil(747)-C(5))-methyltransferase RlmC from Mannheimia succiniciproducens (strain KCTC 0769BP / MBEL55E).